The primary structure comprises 153 residues: MKPQKSLRARAMDILSRQEVSRIGLKRKLAPHAESEEELENVLNEFAERNWQSDLRYAEAYIRSKSRKHGSLRLKQALAQQGIDEKTSRNLLPDRSSEKQAAIAVLRKKFKHPAANLKEKQKQARFLAYRGFDADTVQTALKHAWDENWEDSC.

The protein belongs to the RecX family.

The protein localises to the cytoplasm. Modulates RecA activity. The chain is Regulatory protein RecX from Neisseria gonorrhoeae (strain ATCC 700825 / FA 1090).